A 546-amino-acid chain; its full sequence is CTP synthase (546 aa).

The amidoligase domain stretch occupies residues 1–266; that stretch reads MTTRYIFVTG…DDLVVKRFGL (266 aa). Ser14 serves as a coordination point for CTP. A UTP-binding site is contributed by Ser14. ATP-binding positions include 15–20 and Asp72; that span reads SLGKGI. Residues Asp72 and Glu140 each contribute to the Mg(2+) site. Residues 147 to 149, 187 to 192, and Lys223 contribute to the CTP site; these read DIE and KTKPTQ. UTP contacts are provided by residues 187–192 and Lys223; that span reads KTKPTQ. ATP is bound at residue 239–241; it reads KDV. A Glutamine amidotransferase type-1 domain is found at 291 to 542; the sequence is VIGMVGKYIE…VAAASAHQKR (252 aa). Gly352 provides a ligand contact to L-glutamine. Cys379 acts as the Nucleophile; for glutamine hydrolysis in catalysis. L-glutamine is bound by residues 380–383, Glu403, and Arg470; that span reads LGMQ. Catalysis depends on residues His515 and Glu517.

This sequence belongs to the CTP synthase family. Homotetramer.

It catalyses the reaction UTP + L-glutamine + ATP + H2O = CTP + L-glutamate + ADP + phosphate + 2 H(+). The enzyme catalyses L-glutamine + H2O = L-glutamate + NH4(+). The catalysed reaction is UTP + NH4(+) + ATP = CTP + ADP + phosphate + 2 H(+). The protein operates within pyrimidine metabolism; CTP biosynthesis via de novo pathway; CTP from UDP: step 2/2. Its activity is regulated as follows. Allosterically activated by GTP, when glutamine is the substrate; GTP has no effect on the reaction when ammonia is the substrate. The allosteric effector GTP functions by stabilizing the protein conformation that binds the tetrahedral intermediate(s) formed during glutamine hydrolysis. Inhibited by the product CTP, via allosteric rather than competitive inhibition. Functionally, catalyzes the ATP-dependent amination of UTP to CTP with either L-glutamine or ammonia as the source of nitrogen. Regulates intracellular CTP levels through interactions with the four ribonucleotide triphosphates. The polypeptide is CTP synthase (Shewanella sp. (strain MR-7)).